The chain runs to 233 residues: Probable 2-phosphosulfolactate phosphatase (233 aa).

Belongs to the ComB family. The cofactor is Mg(2+).

The catalysed reaction is (2R)-O-phospho-3-sulfolactate + H2O = (2R)-3-sulfolactate + phosphate. The chain is Probable 2-phosphosulfolactate phosphatase from Symbiobacterium thermophilum (strain DSM 24528 / JCM 14929 / IAM 14863 / T).